The sequence spans 259 residues: uncharacterized protein (259 aa).

Residues 1 to 28 (MNIKRRLKYLTSCLLVSAFFWINSSAWA) form the signal peptide. 2 consecutive transmembrane segments (helical) span residues 32–52 (EIPPSAPWVIYLGGFGGIYVA) and 191–211 (WGFLVGFGLGYDFCPWFGIFT).

It is found in the cell membrane. This is an uncharacterized protein from Coxiella burnetii (strain RSA 493 / Nine Mile phase I).